The chain runs to 252 residues: Urease accessory protein UreH (252 aa).

The protein belongs to the UreD family. UreH, UreF and UreG form a complex that acts as a GTP-hydrolysis-dependent molecular chaperone, activating the urease apoprotein by helping to assemble the nickel containing metallocenter of UreC. The UreE protein probably delivers the nickel.

Its subcellular location is the cytoplasm. Required for maturation of urease via the functional incorporation of the urease nickel metallocenter. This chain is Urease accessory protein UreH, found in Helicobacter hepaticus (strain ATCC 51449 / 3B1).